The following is a 104-amino-acid chain: Iron-sulfur cluster assembly protein CyaY (104 aa).

It belongs to the frataxin family.

In terms of biological role, involved in iron-sulfur (Fe-S) cluster assembly. May act as a regulator of Fe-S biogenesis. This chain is Iron-sulfur cluster assembly protein CyaY, found in Aliivibrio fischeri (strain MJ11) (Vibrio fischeri).